The sequence spans 124 residues: Large ribosomal subunit protein bL12 (124 aa).

This sequence belongs to the bacterial ribosomal protein bL12 family. Homodimer. Part of the ribosomal stalk of the 50S ribosomal subunit. Forms a multimeric L10(L12)X complex, where L10 forms an elongated spine to which 2 to 4 L12 dimers bind in a sequential fashion. Binds GTP-bound translation factors.

Forms part of the ribosomal stalk which helps the ribosome interact with GTP-bound translation factors. Is thus essential for accurate translation. In Akkermansia muciniphila (strain ATCC BAA-835 / DSM 22959 / JCM 33894 / BCRC 81048 / CCUG 64013 / CIP 107961 / Muc), this protein is Large ribosomal subunit protein bL12.